Consider the following 47-residue polypeptide: Short transmembrane mitochondrial protein 1 (47 aa).

A helical membrane pass occupies residues 7-23 (GFTLGNVVGMYLAQNYD).

It belongs to the STMP1 family. As to quaternary structure, interacts with components of the ubiquinol-cytochrome c oxidoreductase (cytochrome b-c1 complex, complex III, CIII), such as UQCRC1/QCR1, UQCRC2/QCR2 and UQCR10/QCR9. Interacts with components of the cytochrome c oxidase (mitochondrial respiratory chain complex IV) complex, such as MT-CO2. Expressed in monocytes and dendritic cells.

The protein localises to the mitochondrion inner membrane. The protein resides in the mitochondrion outer membrane. It is found in the mitochondrion intermembrane space. Microprotein involved in mitochondrial respiratory chain complex III (ubiquinol-cytochrome c oxidoreductase) and complex IV (mitochondrial cytochrome c oxidase complex) assembly. Required for the formation of mitochondrial supercomplexes (SCs). Also required for the activation of the NLRP3 inflammasome. The polypeptide is Short transmembrane mitochondrial protein 1 (Homo sapiens (Human)).